Consider the following 98-residue polypeptide: Large ribosomal subunit protein uL23 (98 aa).

It belongs to the universal ribosomal protein uL23 family. In terms of assembly, part of the 50S ribosomal subunit. Contacts protein L29, and trigger factor when it is bound to the ribosome.

In terms of biological role, one of the early assembly proteins it binds 23S rRNA. One of the proteins that surrounds the polypeptide exit tunnel on the outside of the ribosome. Forms the main docking site for trigger factor binding to the ribosome. This chain is Large ribosomal subunit protein uL23, found in Hahella chejuensis (strain KCTC 2396).